A 324-amino-acid polypeptide reads, in one-letter code: D-alanine--D-alanine ligase (324 aa).

An ATP-grasp domain is found at N120 to E322. I149–T204 provides a ligand contact to ATP. Residues D276, E289, and N291 each contribute to the Mg(2+) site.

This sequence belongs to the D-alanine--D-alanine ligase family. Mg(2+) is required as a cofactor. Mn(2+) serves as cofactor.

The protein resides in the cytoplasm. The catalysed reaction is 2 D-alanine + ATP = D-alanyl-D-alanine + ADP + phosphate + H(+). Its pathway is cell wall biogenesis; peptidoglycan biosynthesis. In terms of biological role, cell wall formation. This is D-alanine--D-alanine ligase from Azobacteroides pseudotrichonymphae genomovar. CFP2.